Reading from the N-terminus, the 102-residue chain is Small ribosomal subunit protein uS10 (102 aa).

A disordered region spans residues 30 to 58 (TGVNLSGPIPLPTKTLEIPTRKSPDGEGT).

Belongs to the universal ribosomal protein uS10 family. As to quaternary structure, part of the 30S ribosomal subunit.

In terms of biological role, involved in the binding of tRNA to the ribosomes. This chain is Small ribosomal subunit protein uS10, found in Haloquadratum walsbyi (strain DSM 16790 / HBSQ001).